The primary structure comprises 179 residues: Large ribosomal subunit protein uL5 (179 aa).

Belongs to the universal ribosomal protein uL5 family. Part of the 50S ribosomal subunit; part of the 5S rRNA/L5/L18/L25 subcomplex. Contacts the 5S rRNA and the P site tRNA. Forms a bridge to the 30S subunit in the 70S ribosome.

This is one of the proteins that bind and probably mediate the attachment of the 5S RNA into the large ribosomal subunit, where it forms part of the central protuberance. In the 70S ribosome it contacts protein S13 of the 30S subunit (bridge B1b), connecting the 2 subunits; this bridge is implicated in subunit movement. Contacts the P site tRNA; the 5S rRNA and some of its associated proteins might help stabilize positioning of ribosome-bound tRNAs. The sequence is that of Large ribosomal subunit protein uL5 from Geotalea uraniireducens (strain Rf4) (Geobacter uraniireducens).